Here is a 261-residue protein sequence, read N- to C-terminus: Putative carbamate hydrolase RutD (261 aa).

One can recognise an AB hydrolase-1 domain in the interval 14-119 (PTILLSSGLG…LINAWSKADP (106 aa)).

It belongs to the AB hydrolase superfamily. Hydrolase RutD family.

The catalysed reaction is carbamate + 2 H(+) = NH4(+) + CO2. Involved in pyrimidine catabolism. May facilitate the hydrolysis of carbamate, a reaction that can also occur spontaneously. The chain is Putative carbamate hydrolase RutD from Agrobacterium fabrum (strain C58 / ATCC 33970) (Agrobacterium tumefaciens (strain C58)).